The following is a 194-amino-acid chain: MSTRSVRKIRETKETKIELYLDIDKKGEVKVSTPVNFLNHMLSTLFYYMNSTATLIAEDKQNFDDHHVVEDTAIVIGEAFKEALGDKKGIRRFSHQIIPMDDALVLVAVDISGRGVSNIELNLERDEIGGLATENIIHFFQTFSYNSGVNMHIIQLRGWNTHHVIEASFKGLGFSLYEASRIVYEETYSLKGSL.

It belongs to the imidazoleglycerol-phosphate dehydratase family.

The protein resides in the cytoplasm. The enzyme catalyses D-erythro-1-(imidazol-4-yl)glycerol 3-phosphate = 3-(imidazol-4-yl)-2-oxopropyl phosphate + H2O. It participates in amino-acid biosynthesis; L-histidine biosynthesis; L-histidine from 5-phospho-alpha-D-ribose 1-diphosphate: step 6/9. This is Imidazoleglycerol-phosphate dehydratase from Sulfurisphaera tokodaii (strain DSM 16993 / JCM 10545 / NBRC 100140 / 7) (Sulfolobus tokodaii).